Consider the following 1067-residue polypeptide: Myocardin-related transcription factor B (1067 aa).

RPEL repeat units lie at residues 46–71 (EVLQLRLQQRRTREQLVDQGIMPPLK), 90–115 (NFLKHKIRSRPNRSELVRMHILEETL), and 134–159 (DDLNEKIAQRPGPLELVEKNILPVDL). Disordered regions lie at residues 175–223 (NLDT…NTTI) and 249–286 (PLSCIVSKPGPALIKQTQPKHTEKPRSKKSKDPKPRVK). Polar residues-rich tracts occupy residues 193–203 (QPASQESQGSA) and 212–223 (SDSSSPVSNTTI). Residues 268–283 (KHTEKPRSKKSKDPKP) are compositionally biased toward basic and acidic residues. The region spanning 390–424 (LDDMKVAELKMELKLRGLPVSGTKMDLIERLKPFQ) is the SAP domain. Positions 540 to 594 (GNTPNVELDAVEKDRKLQEKEKQIEELKRKLEQEQKLVEVLKKQLELEKRGQQQQ) form a coiled coil. Positions 799-819 (ISTSAQPQRSTQLTAVQNGPT) are enriched in polar residues. Positions 799–829 (ISTSAQPQRSTQLTAVQNGPTSLHEKSSTPP) are disordered.

Interacts with SRF.

Its subcellular location is the nucleus. Poor transcriptional factor which uses the canonical single or multiple CArG boxes DNA sequence. Acts as a cofactor of serum response factor (SRF) with the potential to modulate SRF target genes. In Xenopus laevis (African clawed frog), this protein is Myocardin-related transcription factor B (mrtfb).